The chain runs to 217 residues: CXXC-type zinc finger protein 4 (217 aa).

The segment at Met-1–Gln-20 is disordered. Residues Ala-122 to Glu-163 form a CXXC-type zinc finger. Zn(2+) contacts are provided by Cys-129, Cys-132, Cys-135, Cys-141, Cys-144, Cys-147, Cys-157, and Cys-162.

The protein resides in the cytoplasm. Functionally, acts as a negative regulator of the Wnt signaling pathway required for anterior neural structure formation. Ectopic expression induces ventralization. Binds preferentially to DNA containing cytidine-phosphate-guanosine (CpG) dinucleotides over CpH (H=A, T, and C), hemimethylated-CpG and hemimethylated-hydroxymethyl-CpG. The protein is CXXC-type zinc finger protein 4 (cxxc4) of Xenopus laevis (African clawed frog).